Here is a 326-residue protein sequence, read N- to C-terminus: MTAIRKNDMNYTLDDFTKLEKIGEGTYGVVYKGRNRRTQAMVAMKKIRLESEDEGVPSTAVREISLLKELQHPNVVGLEAVIMQENRLYLIFEFLSYDLKRYMDTLSKEEYLPSETLKSYTFQILQAMCFCHQRRVIHRDLKPQNLLVDEKGAIKLADFGLARAIGIPIRVYTHEVVTLWYRAPEILMGAQRYSMGVDMWSIGCIFAEMATKKPLFQGDSEIDELFRIFRILGTPTELEWNGVESLPDYKATFPKWRENFLRDKFYDKKSGNYLMDEDAFSLLEGLLIYDPALRISSKKALHHPYFNDIDTSKLPAGNYRGELQLE.

Positions 16 to 306 constitute a Protein kinase domain; sequence FTKLEKIGEG…SKKALHHPYF (291 aa). ATP contacts are provided by residues 22 to 30 and K45; that span reads IGEGTYGVV. Residue D140 is the Proton acceptor of the active site.

The protein belongs to the protein kinase superfamily. CMGC Ser/Thr protein kinase family. CDC2/CDKX subfamily. As to quaternary structure, forms a stable but non-covalent complex with a regulatory subunit and with a cyclin. Interacts with cks-1.

The protein resides in the nucleus. Its subcellular location is the cytoplasm. The protein localises to the cytoskeleton. It is found in the microtubule organizing center. It localises to the centrosome. The enzyme catalyses L-seryl-[protein] + ATP = O-phospho-L-seryl-[protein] + ADP + H(+). The catalysed reaction is L-threonyl-[protein] + ATP = O-phospho-L-threonyl-[protein] + ADP + H(+). It catalyses the reaction [DNA-directed RNA polymerase] + ATP = phospho-[DNA-directed RNA polymerase] + ADP + H(+). Phosphorylation both activates and inactivates the enzyme depending on the site of phosphorylation. Functionally, plays a key role in the control of the eukaryotic cell cycle. Required for entry into S-phase and mitosis. Acts as a component of the kinase complex that phosphorylates the repetitive C-terminus of RNA polymerase II. May function in concert with npp-16 to arrest prophase blastomeres in response to anoxia. The sequence is that of Cyclin-dependent kinase 1 from Caenorhabditis briggsae.